A 510-amino-acid chain; its full sequence is NAD(P)H-quinone oxidoreductase subunit 2 B, chloroplastic (510 aa).

14 consecutive transmembrane segments (helical) span residues 31-51 (FIFP…IDLT), 59-79 (WFYF…LFRW), 99-119 (IFQF…VEYI), 124-144 (MAIT…MFLC), 149-169 (LITI…LSGY), 184-204 (LLMG…LYGL), 229-249 (ISIA…LAPF), 261-281 (PTPV…ALAT), 295-315 (WHLL…LLAI), 323-343 (MLAY…IVGD), 354-374 (YMLF…LFGL), 395-415 (ALSL…AGFF), 418-438 (LYLF…IGLL), and 484-504 (MTVC…ILAI).

This sequence belongs to the complex I subunit 2 family. NDH is composed of at least 16 different subunits, 5 of which are encoded in the nucleus.

Its subcellular location is the plastid. It is found in the chloroplast thylakoid membrane. The catalysed reaction is a plastoquinone + NADH + (n+1) H(+)(in) = a plastoquinol + NAD(+) + n H(+)(out). The enzyme catalyses a plastoquinone + NADPH + (n+1) H(+)(in) = a plastoquinol + NADP(+) + n H(+)(out). In terms of biological role, NDH shuttles electrons from NAD(P)H:plastoquinone, via FMN and iron-sulfur (Fe-S) centers, to quinones in the photosynthetic chain and possibly in a chloroplast respiratory chain. The immediate electron acceptor for the enzyme in this species is believed to be plastoquinone. Couples the redox reaction to proton translocation, and thus conserves the redox energy in a proton gradient. In Hordeum vulgare (Barley), this protein is NAD(P)H-quinone oxidoreductase subunit 2 B, chloroplastic.